Reading from the N-terminus, the 443-residue chain is Putative type II methyltransferase M.BsuMIIP (443 aa).

The 437-residue stretch at 4–440 folds into the SAM-dependent MTase C5-type domain; the sequence is LRVMSLFSGI…QELIHTYVNK (437 aa). The active site involves Cys78.

It belongs to the class I-like SAM-binding methyltransferase superfamily. C5-methyltransferase family.

It catalyses the reaction a 2'-deoxycytidine in DNA + S-adenosyl-L-methionine = a 5-methyl-2'-deoxycytidine in DNA + S-adenosyl-L-homocysteine + H(+). Its function is as follows. A putative methylase, recognizes the double-stranded sequence 5'-GGCC-3', methylates C-?. There is no known cognate restriction enzyme. This is Putative type II methyltransferase M.BsuMIIP (mtbP) from Bacillus subtilis (strain 168).